A 289-amino-acid polypeptide reads, in one-letter code: 4-hydroxybenzoate octaprenyltransferase (289 aa).

The next 9 helical transmembrane spans lie at 22–42 (AGWL…SHGF), 45–65 (WHLV…GCCI), 96–116 (LGLG…TNAV), 118–138 (IAWS…KRYV), 140–160 (MPQA…FAAV), 164–184 (VPPL…AYDT), 211–231 (VAGV…ALIQ), 236–256 (AIFM…GWLI), and 267–287 (AFRL…LSYW).

The protein belongs to the UbiA prenyltransferase family. The cofactor is Mg(2+).

It localises to the cell inner membrane. The catalysed reaction is all-trans-octaprenyl diphosphate + 4-hydroxybenzoate = 4-hydroxy-3-(all-trans-octaprenyl)benzoate + diphosphate. Its pathway is cofactor biosynthesis; ubiquinone biosynthesis. In terms of biological role, catalyzes the prenylation of para-hydroxybenzoate (PHB) with an all-trans polyprenyl group. Mediates the second step in the final reaction sequence of ubiquinone-8 (UQ-8) biosynthesis, which is the condensation of the polyisoprenoid side chain with PHB, generating the first membrane-bound Q intermediate 3-octaprenyl-4-hydroxybenzoate. This is 4-hydroxybenzoate octaprenyltransferase from Polaromonas naphthalenivorans (strain CJ2).